Consider the following 321-residue polypeptide: Tetraacyldisaccharide 4'-kinase (321 aa).

54-61 (SVGGTGKT) contacts ATP.

Belongs to the LpxK family.

It catalyses the reaction a lipid A disaccharide + ATP = a lipid IVA + ADP + H(+). It participates in glycolipid biosynthesis; lipid IV(A) biosynthesis; lipid IV(A) from (3R)-3-hydroxytetradecanoyl-[acyl-carrier-protein] and UDP-N-acetyl-alpha-D-glucosamine: step 6/6. Functionally, transfers the gamma-phosphate of ATP to the 4'-position of a tetraacyldisaccharide 1-phosphate intermediate (termed DS-1-P) to form tetraacyldisaccharide 1,4'-bis-phosphate (lipid IVA). This chain is Tetraacyldisaccharide 4'-kinase, found in Rickettsia conorii (strain ATCC VR-613 / Malish 7).